Consider the following 239-residue polypeptide: tRNA1(Val) (adenine(37)-N6)-methyltransferase (239 aa).

This sequence belongs to the methyltransferase superfamily. tRNA (adenine-N(6)-)-methyltransferase family.

The protein localises to the cytoplasm. It carries out the reaction adenosine(37) in tRNA1(Val) + S-adenosyl-L-methionine = N(6)-methyladenosine(37) in tRNA1(Val) + S-adenosyl-L-homocysteine + H(+). Specifically methylates the adenine in position 37 of tRNA(1)(Val) (anticodon cmo5UAC). This Vibrio campbellii (strain ATCC BAA-1116) protein is tRNA1(Val) (adenine(37)-N6)-methyltransferase.